A 440-amino-acid chain; its full sequence is Long-chain alkane monooxygenase (440 aa).

Residues D58, 137 to 138 (SH), Y158, and 227 to 230 (AGMS) each bind FMN.

The protein belongs to the NtaA/SnaA/DszA monooxygenase family. As to quaternary structure, homodimer.

It localises to the secreted. It catalyses the reaction a long-chain alkane + FMNH2 + O2 = a long chain fatty alcohol + FMN + H2O + H(+). In terms of biological role, involved in the degradation of long-chain alkanes. Converts alkanes ranging from C(15) to C(36) into their corresponding primary alcohols. In Geobacillus thermodenitrificans (strain NG80-2), this protein is Long-chain alkane monooxygenase.